The sequence spans 447 residues: Tubulin beta-5 chain (447 aa).

GTP contacts are provided by glutamine 11, glutamate 69, serine 138, glycine 142, threonine 143, glycine 144, asparagine 204, and asparagine 226. Residue glutamate 69 coordinates Mg(2+). The segment at 424–447 (QYQDATAEEEGEFDEDEELDDAMG) is disordered. A compositionally biased stretch (acidic residues) spans 429-447 (TAEEEGEFDEDEELDDAMG).

It belongs to the tubulin family. In terms of assembly, dimer of alpha and beta chains. A typical microtubule is a hollow water-filled tube with an outer diameter of 25 nm and an inner diameter of 15 nM. Alpha-beta heterodimers associate head-to-tail to form protofilaments running lengthwise along the microtubule wall with the beta-tubulin subunit facing the microtubule plus end conferring a structural polarity. Microtubules usually have 13 protofilaments but different protofilament numbers can be found in some organisms and specialized cells. Mg(2+) serves as cofactor.

The protein resides in the cytoplasm. It localises to the cytoskeleton. Functionally, tubulin is the major constituent of microtubules, a cylinder consisting of laterally associated linear protofilaments composed of alpha- and beta-tubulin heterodimers. Microtubules grow by the addition of GTP-tubulin dimers to the microtubule end, where a stabilizing cap forms. Below the cap, tubulin dimers are in GDP-bound state, owing to GTPase activity of alpha-tubulin. The protein is Tubulin beta-5 chain (TUBB5) of Ectocarpus variabilis (Brown alga).